Reading from the N-terminus, the 341-residue chain is Probable sulfurtransferase (341 aa).

Residues cysteine 40, cysteine 42, cysteine 58, and cysteine 61 each coordinate Zn(2+). An ATP-binding site is contributed by glycine 88. [4Fe-4S] cluster contacts are provided by cysteine 176 and cysteine 179. 2 residues coordinate ATP: arginine 183 and glycine 202. Cysteine 267 is a [4Fe-4S] cluster binding site. Cysteine 316, cysteine 319, cysteine 328, and cysteine 331 together coordinate Zn(2+).

The protein belongs to the TtcA family. It depends on [4Fe-4S] cluster as a cofactor. Mg(2+) serves as cofactor.

This chain is Probable sulfurtransferase, found in Methanocaldococcus jannaschii (strain ATCC 43067 / DSM 2661 / JAL-1 / JCM 10045 / NBRC 100440) (Methanococcus jannaschii).